A 156-amino-acid polypeptide reads, in one-letter code: Oxidized purine nucleoside triphosphate hydrolase (156 aa).

The Nudix hydrolase domain maps to 3–132; that stretch reads ASRLYTLVLV…WFPLLLQKKK (130 aa). T8 lines the 2-oxo-dATP pocket. 8-oxo-dGMP-binding residues include T8 and K23. Positions 8 and 23 each coordinate 8-oxo-dGTP. Residues T8 and K23 each contribute to the N(6)-methyl-AMP site. Residues T8 and K23 each contribute to the O(6)-methyl-dGMP site. Position 27 (F27) interacts with 8-oxo-ATP. 2-oxo-dATP-binding positions include N33 and 35 to 38; that span reads FGGK. N33 provides a ligand contact to 8-oxo-dGMP. 8-oxo-dGTP is bound by residues N33 and 35-38; that span reads FGGK. N33 contacts O(6)-methyl-dGMP. Residues 35–38 and E52 contribute to the 8-oxo-ATP site; that span reads FGGK. Mg(2+) contacts are provided by G36, E52, E55, E56, and E100. The Nudix box motif lies at 37 to 58; that stretch reads GKVQEGETIEDGARRELQEESG. Residue E56 participates in 8-oxo-ATP binding. 2-oxo-dATP is bound at residue 117–120; that stretch reads WPDD. An 8-oxo-dGMP-binding site is contributed by 117–120; sequence WPDD. 117 to 120 lines the 8-oxo-dGTP pocket; the sequence is WPDD. 117 to 120 provides a ligand contact to N(6)-methyl-AMP; it reads WPDD. 117 to 120 contributes to the O(6)-methyl-dGMP binding site; it reads WPDD. An 8-oxo-ATP-binding site is contributed by 117–120; the sequence is WPDD.

It belongs to the Nudix hydrolase family. Monomer. Mg(2+) is required as a cofactor. Post-translationally, the N-terminus is blocked. Widely expressed with highest expression in thymus, testis, embryo and proliferating blood lymphocytes.

It is found in the cytoplasm. Its subcellular location is the cytosol. The protein resides in the mitochondrion matrix. It localises to the nucleus. The enzyme catalyses 2-oxo-dATP + H2O = 2-oxo-dAMP + diphosphate + H(+). It carries out the reaction 2-oxo-ATP + H2O = 2-oxo-AMP + diphosphate + H(+). The catalysed reaction is 8-oxo-dGTP + H2O = 8-oxo-dGMP + diphosphate + H(+). It catalyses the reaction 8-oxo-dATP + H2O = 8-oxo-dAMP + diphosphate + H(+). The enzyme catalyses O(6)-methyl-dGTP + H2O = O(6)-methyl-dGMP + diphosphate + H(+). It carries out the reaction N(6)-methyl-dATP + H2O = N(6)-methyl-dAMP + diphosphate + H(+). The catalysed reaction is N(6)-methyl-ATP + H2O = N(6)-methyl-AMP + diphosphate + H(+). Inhibited by 2-oxo-dADP and 8-oxo-dGDP. Oxidized purine nucleoside triphosphate hydrolase which is a prominent sanitizer of the oxidized nucleotide pool. Catalyzes the hydrolysis of 2-oxo-dATP (2-hydroxy-dATP) into 2-oxo-dAMP. Also has a significant hydrolase activity toward 2-oxo-ATP, 8-oxo-dGTP and 8-oxo-dATP. Through the hydrolysis of oxidized purine nucleoside triphosphates, prevents their incorporation into DNA and the subsequent transversions A:T to C:G and G:C to T:A. Also catalyzes the hydrolysis of methylated purine nucleoside triphosphate preventing their integration into DNA. Through this antimutagenic activity protects cells from oxidative stress. The sequence is that of Oxidized purine nucleoside triphosphate hydrolase (NUDT1) from Homo sapiens (Human).